A 257-amino-acid polypeptide reads, in one-letter code: Hydroxyacylglutathione hydrolase (257 aa).

Residues His-54, His-56, Asp-58, His-59, His-109, Asp-129, and His-167 each contribute to the Zn(2+) site.

It belongs to the metallo-beta-lactamase superfamily. Glyoxalase II family. As to quaternary structure, monomer. Zn(2+) is required as a cofactor.

It carries out the reaction an S-(2-hydroxyacyl)glutathione + H2O = a 2-hydroxy carboxylate + glutathione + H(+). It functions in the pathway secondary metabolite metabolism; methylglyoxal degradation; (R)-lactate from methylglyoxal: step 2/2. In terms of biological role, thiolesterase that catalyzes the hydrolysis of S-D-lactoyl-glutathione to form glutathione and D-lactic acid. In Marinomonas sp. (strain MWYL1), this protein is Hydroxyacylglutathione hydrolase.